A 228-amino-acid polypeptide reads, in one-letter code: MGFTDFVSDAGLSLANNYLATRSYIVGHAPSQADVVTYKAFTASPDAEKYPHVARWYKHIASYESEFPTLPGDASKAFTAYGPEGSEASANPKDKPAEEEEEEDLFASDSEDEDPAVVAERNKNLEEYKKKKAAKGPKPAAKSLVTLEVKPWDDETNLEELEANVRAIEMDGLVWGASKFVAVGFGIKKLQINLVVEDEKVSTDELQAQIEEDEDHVQSTDVAAMQKL.

Positions 74–116 (ASKAFTAYGPEGSEASANPKDKPAEEEEEEDLFASDSEDEDPA) are disordered. Residues 84 to 93 (EGSEASANPK) are igE-binding. The span at 97–115 (AEEEEEEDLFASDSEDEDP) shows a compositional bias: acidic residues.

It belongs to the EF-1-beta/EF-1-delta family. As to quaternary structure, EF-1 is composed of 4 subunits: alpha, beta, delta, and gamma.

Functionally, EF-1-beta and EF-1-delta stimulate the exchange of GDP bound to EF-1-alpha to GTP. This chain is Elongation factor 1-beta, found in Penicillium citrinum.